The sequence spans 469 residues: UDP-glycosyltransferase 75B1 (469 aa).

H16 serves as the catalytic Proton acceptor. H16 contributes to the an anthocyanidin binding site. Residues Q334, H349, W352, S354, E357, D373, and Q374 each contribute to the UDP-alpha-D-glucose site.

It belongs to the UDP-glycosyltransferase family. Interacts with CALS1, ROP1 and phragmoplastin.

The protein localises to the cytoplasm. Its subcellular location is the perinuclear region. The protein resides in the cytoskeleton. It is found in the phragmoplast. It catalyses the reaction (indol-3-yl)acetate + UDP-alpha-D-glucose = 1-O-(indol-3-ylacetyl)-beta-D-glucose + UDP. It participates in plant hormone metabolism; auxin conjugation. Possesses low catalytic activity on indole-3-acetic acid (IAA) in vitro. May transfer UDP-glucose from sucrose synthase to callose synthase for the synthesis of callose at the forming cell plate during cytokinesis. Has high affinity for 4-aminobenzoate. Catalyzes the formation of 4-aminobenzoate glucose ester which represents a storage form of 4-aminobenzoate in the vacuole. Is the major source of this activity in the plant. Also active in vitro on benzoates and benzoate derivatives. This is UDP-glycosyltransferase 75B1 (UGT75B1) from Arabidopsis thaliana (Mouse-ear cress).